The primary structure comprises 407 residues: Aminoacylase-1 (407 aa).

Alanine 2 carries the N-acetylalanine modification. Histidine 80 serves as a coordination point for Zn(2+). Residue aspartate 82 is part of the active site. Aspartate 113 lines the Zn(2+) pocket. Glutamate 147 functions as the Proton acceptor in the catalytic mechanism. The Zn(2+) site is built by glutamate 148, glutamate 175, and histidine 372.

Belongs to the peptidase M20A family. In terms of assembly, homodimer. Interacts with SPHK1. The cofactor is Zn(2+).

The protein resides in the cytoplasm. It catalyses the reaction an N-acyl-L-amino acid + H2O = an L-alpha-amino acid + a carboxylate. It carries out the reaction N-acetyl-L-methionine + H2O = L-methionine + acetate. The enzyme catalyses N-acetyl-L-glutamine + H2O = L-glutamine + acetate. Its function is as follows. Catalyzes the hydrolysis of N-acetylated amino acids to acetate and free amino acids. This chain is Aminoacylase-1 (ACY1), found in Sus scrofa (Pig).